The following is a 218-amino-acid chain: uncharacterized protein (218 aa).

In terms of domain architecture, CN hydrolase spans 4-207; it reads WKVAAAQYEP…SLLLVGQRSS (204 aa).

This is an uncharacterized protein from Escherichia coli (strain K12).